The following is a 353-amino-acid chain: 41 kDa protein (353 aa).

The disordered stretch occupies residues 132–197 (QSSHASALEQ…DNNSSDTIKD (66 aa)). The segment covering 157 to 169 (LDNKGKSDSENCN) has biased composition (basic and acidic residues).

The chain is 41 kDa protein from Lactobacillus helveticus (Lactobacillus suntoryeus).